The primary structure comprises 70 residues: DNA gyrase inhibitor YacG (70 aa).

Positions 20, 23, 35, and 39 each coordinate Zn(2+).

The protein belongs to the DNA gyrase inhibitor YacG family. In terms of assembly, interacts with GyrB. It depends on Zn(2+) as a cofactor.

In terms of biological role, inhibits all the catalytic activities of DNA gyrase by preventing its interaction with DNA. Acts by binding directly to the C-terminal domain of GyrB, which probably disrupts DNA binding by the gyrase. The chain is DNA gyrase inhibitor YacG from Rhizobium leguminosarum bv. trifolii (strain WSM2304).